Consider the following 280-residue polypeptide: Probable 6-phosphogluconolactonase 2 (280 aa).

The protein belongs to the glucosamine/galactosamine-6-phosphate isomerase family. 6-phosphogluconolactonase subfamily.

The catalysed reaction is 6-phospho-D-glucono-1,5-lactone + H2O = 6-phospho-D-gluconate + H(+). Its pathway is carbohydrate degradation; pentose phosphate pathway; D-ribulose 5-phosphate from D-glucose 6-phosphate (oxidative stage): step 2/3. In terms of biological role, hydrolysis of 6-phosphogluconolactone to 6-phosphogluconate. The sequence is that of Probable 6-phosphogluconolactonase 2 from Oryza sativa subsp. indica (Rice).